Here is a 177-residue protein sequence, read N- to C-terminus: Isopentenyl-diphosphate Delta-isomerase (177 aa).

Mn(2+)-binding residues include H22 and H28. In terms of domain architecture, Nudix hydrolase spans 26 to 160 (LRHMAISVFV…PERFTPWLRI (135 aa)). C62 is a catalytic residue. H64 provides a ligand contact to Mn(2+). E82 lines the Mg(2+) pocket. Residues E108 and E110 each contribute to the Mn(2+) site. E110 is an active-site residue.

The protein belongs to the IPP isomerase type 1 family. Requires Mg(2+) as cofactor. It depends on Mn(2+) as a cofactor.

Its subcellular location is the cytoplasm. The enzyme catalyses isopentenyl diphosphate = dimethylallyl diphosphate. It participates in isoprenoid biosynthesis; dimethylallyl diphosphate biosynthesis; dimethylallyl diphosphate from isopentenyl diphosphate: step 1/1. The protein operates within porphyrin-containing compound metabolism; chlorophyll biosynthesis. Catalyzes the 1,3-allylic rearrangement of the homoallylic substrate isopentenyl (IPP) to its highly electrophilic allylic isomer, dimethylallyl diphosphate (DMAPP). This Cereibacter sphaeroides (strain KD131 / KCTC 12085) (Rhodobacter sphaeroides) protein is Isopentenyl-diphosphate Delta-isomerase.